Consider the following 551-residue polypeptide: Cation/acetate symporter ActP (551 aa).

A run of 14 helical transmembrane segments spans residues His5–Gly25, Ile34–Ala54, Gly77–Val97, Gly104–Glu124, Leu150–Ala170, Val184–Ala204, Trp207–Val227, Ile263–Leu283, Gly304–Val324, Phe356–Leu376, Val406–Glu426, Ile430–Ile450, Leu469–Leu489, and Tyr498–Ile518.

This sequence belongs to the sodium:solute symporter (SSF) (TC 2.A.21) family.

Its subcellular location is the cell inner membrane. Its function is as follows. Transports acetate. The polypeptide is Cation/acetate symporter ActP (Yersinia pseudotuberculosis serotype IB (strain PB1/+)).